A 362-amino-acid chain; its full sequence is Heat-inducible transcription repressor HrcA (362 aa).

Belongs to the HrcA family.

Negative regulator of class I heat shock genes (grpE-dnaK-dnaJ and groELS operons). Prevents heat-shock induction of these operons. This Rhizobium rhizogenes (strain K84 / ATCC BAA-868) (Agrobacterium radiobacter) protein is Heat-inducible transcription repressor HrcA.